A 119-amino-acid chain; its full sequence is Large ribosomal subunit protein bL20 (119 aa).

This sequence belongs to the bacterial ribosomal protein bL20 family.

In terms of biological role, binds directly to 23S ribosomal RNA and is necessary for the in vitro assembly process of the 50S ribosomal subunit. It is not involved in the protein synthesizing functions of that subunit. In Xanthomonas oryzae pv. oryzae (strain PXO99A), this protein is Large ribosomal subunit protein bL20.